We begin with the raw amino-acid sequence, 330 residues long: 4-hydroxythreonine-4-phosphate dehydrogenase (330 aa).

His-136 and Thr-137 together coordinate substrate. 3 residues coordinate a divalent metal cation: His-166, His-211, and His-266. Substrate-binding residues include Lys-274, Asn-283, and Arg-292.

Belongs to the PdxA family. In terms of assembly, homodimer. Zn(2+) is required as a cofactor. It depends on Mg(2+) as a cofactor. Requires Co(2+) as cofactor.

Its subcellular location is the cytoplasm. It carries out the reaction 4-(phosphooxy)-L-threonine + NAD(+) = 3-amino-2-oxopropyl phosphate + CO2 + NADH. It functions in the pathway cofactor biosynthesis; pyridoxine 5'-phosphate biosynthesis; pyridoxine 5'-phosphate from D-erythrose 4-phosphate: step 4/5. In terms of biological role, catalyzes the NAD(P)-dependent oxidation of 4-(phosphooxy)-L-threonine (HTP) into 2-amino-3-oxo-4-(phosphooxy)butyric acid which spontaneously decarboxylates to form 3-amino-2-oxopropyl phosphate (AHAP). The chain is 4-hydroxythreonine-4-phosphate dehydrogenase from Serratia proteamaculans (strain 568).